The primary structure comprises 555 residues: Developmental regulatory protein wetA (555 aa).

4 disordered regions span residues T113–S171, Q250–L310, T419–K488, and G508–K531. Polar residues-rich tracts occupy residues Q162 to S171, P259 to T281, S293 to L310, T419 to I431, and S464 to K488.

It belongs to the wetA family.

Functionally, brlA, abaA and wetA are pivotal regulators of conidiophore development and conidium maturation. They act individually and together to regulate their own expression and that of numerous other sporulation-specific genes. Responsible for activating a set of genes whose products make up the final two conidial wall layers or direct their assembly and, through this activity, is responsible for acquisition of spore dormancy. The protein is Developmental regulatory protein wetA of Emericella nidulans (strain FGSC A4 / ATCC 38163 / CBS 112.46 / NRRL 194 / M139) (Aspergillus nidulans).